Reading from the N-terminus, the 333-residue chain is MDNARLNSFLEYPILGSGDSGTCSARVYSSDHGITTFQSCAVSANSCGGDDRFLGGRGVQITSPHHHHHHHHHPQPATYQTSGNLGVSYSHSSCGPSYGAQNFSAPYGPYGLNQEADVSGGYPPCAPAVYSGNLSSPMVQHHHHHQGYAGGTVGSPQYIHHSYGQEHQSLALATYNNSLSPLHASHQEACRSPASETSSPAQTFDWMKVKRNPPKTGKVGEYGYVGQPNAVRTNFTTKQLTELEKEFHFNKYLTRARSEIAASLQLNETQVKIWFQNRRMKQKKREKEGLLPMSPATPPGSDEKTEESSEKSSSSPSAPSPASSTSDTLTTSH.

The disordered stretch occupies residues 61 to 82 (ITSPHHHHHHHHHPQPATYQTS). Residues 64-74 (PHHHHHHHHHP) show a composition bias toward basic residues. An interaction with OGT region spans residues 74 to 202 (PQPATYQTSG…PASETSSPAQ (129 aa)). Residue threonine 152 is glycosylated (O-linked (GlcNAc) threonine). Positions 203–208 (TFDWMK) match the Antp-type hexapeptide motif. The homeobox DNA-binding region spans 227 to 286 (QPNAVRTNFTTKQLTELEKEFHFNKYLTRARSEIAASLQLNETQVKIWFQNRRMKQKKRE). Residues 279–333 (RMKQKKREKEGLLPMSPATPPGSDEKTEESSEKSSSSPSAPSPASSTSDTLTTSH) are disordered. Residues 301 to 310 (SDEKTEESSE) show a composition bias toward basic and acidic residues. Residues 311-333 (KSSSSPSAPSPASSTSDTLTTSH) show a composition bias toward low complexity.

The protein belongs to the Antp homeobox family. Labial subfamily. Interacts with OGT (via TPR repeats domain); the interaction takes place mainly in the nucleus. Forms a DNA-binding heterodimer with transcription factor PBX1. In terms of processing, glycosylated by OGT.

It is found in the nucleus. Sequence-specific transcription factor. Regulates multiple developmental processes including brainstem, inner and outer ear, abducens nerve and cardiovascular development and morphogenesis as well as cognition and behavior. Also part of a developmental regulatory system that provides cells with specific positional identities on the anterior-posterior axis. Acts on the anterior body structures. Seems to act in the maintenance and/or generation of hindbrain segments. Activates transcription in the presence of PBX1A and PKNOX1. The protein is Homeobox protein Hox-A1 (Hoxa1) of Rattus norvegicus (Rat).